Here is a 516-residue protein sequence, read N- to C-terminus: uncharacterized protein (516 aa).

The first 22 residues, 1-22 (MLYRFWKTGLAIFMPGCILLSS), serve as a signal peptide directing secretion. The N-palmitoyl cysteine moiety is linked to residue cysteine 23. Cysteine 23 carries the S-diacylglycerol cysteine lipid modification.

It belongs to the MG067/MG068/MG395 family.

The protein resides in the cell membrane. This is an uncharacterized protein from Mycoplasma genitalium (strain ATCC 33530 / DSM 19775 / NCTC 10195 / G37) (Mycoplasmoides genitalium).